A 610-amino-acid polypeptide reads, in one-letter code: MWTFPVDYDVIVIGAGHAGCEAAYCAAKMGASVLLLTSNLDTVAKLSCNPAVGGIGKGHIVREIDALGGIMAEITDLSGIQFRILNQTKGPAVRAPRAQVDKQLYHIHMKRLLEQVPGLHIMQGTAEALLDNGEKVLGVSTKEGWAYLGKTVVLSSGTFMRGLIHIGTQNFSGGRLGDAASLGLSEDLKRLGFPLGRLKTGTPARLLASSIDFSVMEEQPGDHNVCFVHRNEMFVPTLPQVSCHITHTTDQTKDLITKNLHRSALYGGRIEGVGPRYCPSIEDKIVKFADKDRHHIFIEPEGLNTQEVYVNGLSTSMPFDVQYDIIRSVSGLENAIITRPAYAIEYDYVHGNVIFPSLESKLIEGLFLCGQINGTTGYEEAAAQGLIAGVNAVNKVLRHPPFVPSRQESYIGVMLDDLTTQVLDEPYRMFTSRAEHRLLLRQDNAGMRLSHYGHSLGLLSSERYAMFQEQKACIEQEKERLSKTFRKYGDTVVPLTKVLCRPEVSYQQLLTEFPADVRDLGPVVGASLEMEIKYSGYISRQQTLIRSMERSENISIPEDIDYHSISALSLEAREKLSKFTPRTIGSAARISGISVADIQVLMVSLKKDAH.

Position 14-19 (14-19) interacts with FAD; it reads GAGHAG. An NAD(+)-binding site is contributed by 274 to 288; sequence GPRYCPSIEDKIVKF.

Belongs to the MnmG family. Homodimer. Heterotetramer of two MnmE and two MnmG subunits. The cofactor is FAD.

It localises to the cytoplasm. Functionally, NAD-binding protein involved in the addition of a carboxymethylaminomethyl (cmnm) group at the wobble position (U34) of certain tRNAs, forming tRNA-cmnm(5)s(2)U34. This chain is tRNA uridine 5-carboxymethylaminomethyl modification enzyme MnmG, found in Chlamydia trachomatis serovar A (strain ATCC VR-571B / DSM 19440 / HAR-13).